The chain runs to 229 residues: Ribonuclease 3 (229 aa).

An RNase III domain is found at 5 to 127; the sequence is LAGLERKLGY…LIGAIYLDAD (123 aa). Residue Glu-40 participates in Mg(2+) binding. Asp-44 is a catalytic residue. Mg(2+)-binding residues include Asp-113 and Glu-116. Residue Glu-116 is part of the active site. Residues 154 to 224 enclose the DRBM domain; the sequence is DPKTRLQEFL…AASALIALGV (71 aa).

Belongs to the ribonuclease III family. In terms of assembly, homodimer. It depends on Mg(2+) as a cofactor.

Its subcellular location is the cytoplasm. The enzyme catalyses Endonucleolytic cleavage to 5'-phosphomonoester.. Digests double-stranded RNA. Involved in the processing of primary rRNA transcript to yield the immediate precursors to the large and small rRNAs (23S and 16S). Processes some mRNAs, and tRNAs when they are encoded in the rRNA operon. Processes pre-crRNA and tracrRNA of type II CRISPR loci if present in the organism. The polypeptide is Ribonuclease 3 (Pseudomonas putida (strain ATCC 700007 / DSM 6899 / JCM 31910 / BCRC 17059 / LMG 24140 / F1)).